The chain runs to 346 residues: MSQIGINDGASQQPAGTTLGGVAARLGKVAVLMGGASAEREVSLMSGQGVLQALISQGVDAHAFDPAERDLAELKVEGFSHCFIALHGRFGEDGTVQGALELLGIPYTGSGVMASSIAIDKVMTKRIWRSEGLPTPEWRQVDSAAATSEAFAALGSPMIVKPDREGSTIGLTKVTQIEQCGAAYALAARHDAMVLCEQFVKGDEVTIPLLGSGAGAHALPVIRIVAPDGNYDYQNKYFTDTTQYLVPANLPAGEEAHIQQLALKAYQVLGCRGWARVDVMIDARTRAPFLLEINTSPGMTPHSLVPMAAKAAGVSYPALCLEVLRHATLDYAAAGGDAQQPSTEPA.

An ATP-grasp domain is found at 125 to 325 (KRIWRSEGLP…YPALCLEVLR (201 aa)). 151 to 206 (FAALGSPMIVKPDREGSTIGLTKVTQIEQCGAAYALAARHDAMVLCEQFVKGDEVT) is a binding site for ATP. Mg(2+) is bound by residues Asp-278, Glu-292, and Asn-294.

Belongs to the D-alanine--D-alanine ligase family. It depends on Mg(2+) as a cofactor. Requires Mn(2+) as cofactor.

The protein resides in the cytoplasm. It catalyses the reaction 2 D-alanine + ATP = D-alanyl-D-alanine + ADP + phosphate + H(+). Its pathway is cell wall biogenesis; peptidoglycan biosynthesis. Its function is as follows. Cell wall formation. The polypeptide is D-alanine--D-alanine ligase (Albidiferax ferrireducens (strain ATCC BAA-621 / DSM 15236 / T118) (Rhodoferax ferrireducens)).